Consider the following 211-residue polypeptide: Uracil phosphoribosyltransferase (211 aa).

5-phospho-alpha-D-ribose 1-diphosphate contacts are provided by residues Arg-77, Arg-102, and 129 to 137 (DPMLATGGS). Uracil is bound by residues Ile-192 and 197–199 (GDA). Position 198 (Asp-198) interacts with 5-phospho-alpha-D-ribose 1-diphosphate.

The protein belongs to the UPRTase family. It depends on Mg(2+) as a cofactor.

The enzyme catalyses UMP + diphosphate = 5-phospho-alpha-D-ribose 1-diphosphate + uracil. The protein operates within pyrimidine metabolism; UMP biosynthesis via salvage pathway; UMP from uracil: step 1/1. With respect to regulation, allosterically activated by GTP. Its function is as follows. Catalyzes the conversion of uracil and 5-phospho-alpha-D-ribose 1-diphosphate (PRPP) to UMP and diphosphate. The sequence is that of Uracil phosphoribosyltransferase from Corynebacterium aurimucosum (strain ATCC 700975 / DSM 44827 / CIP 107346 / CN-1) (Corynebacterium nigricans).